Here is a 682-residue protein sequence, read N- to C-terminus: Serine/threonine-protein kinase PAK 6 (682 aa).

Disordered regions lie at residues 1–30 (MFRK…DPKE), 132–170 (SPQS…QALP), 200–256 (LQSS…QESS), and 270–367 (PATG…NLYL). Residues 12–25 (ISAPQNFQHRVHTS) enclose the CRIB domain. The interval 26 to 407 (FDPKEGKFVG…VVDQGDPRLL (382 aa)) is linker. Polar residues-rich tracts occupy residues 270-279 (PATGAASSSK) and 297-334 (KDSS…QKSL). The Protein kinase domain occupies 408 to 659 (LDSYVKIGEG…AQELLDHPFL (252 aa)). ATP is bound by residues 414–422 (IGEGSTGIV) and Lys-437. Residue Asp-527 is the Proton acceptor of the active site. At Ser-561 the chain carries Phosphoserine; by autocatalysis.

The protein belongs to the protein kinase superfamily. STE Ser/Thr protein kinase family. STE20 subfamily. As to quaternary structure, interacts tightly with GTP-bound but not GDP-bound CDC42/p21 and RAC1. Interacts with the androgen receptor AR. Interacts with IQGAP1 and PPM1B. Post-translationally, autophosphorylated. Phosphorylated by MAP2K6/MAPKK6, leading to PAK6 activation.

The protein localises to the cytoplasm. It localises to the nucleus. The enzyme catalyses L-seryl-[protein] + ATP = O-phospho-L-seryl-[protein] + ADP + H(+). It catalyses the reaction L-threonyl-[protein] + ATP = O-phospho-L-threonyl-[protein] + ADP + H(+). Functionally, serine/threonine protein kinase that plays a role in the regulation of gene transcription. The kinase activity is induced by various effectors including AR or MAP2K6/MAPKK6. Phosphorylates the DNA-binding domain of androgen receptor/AR and thereby inhibits AR-mediated transcription. Also inhibits ESR1-mediated transcription. May play a role in cytoskeleton regulation by interacting with IQGAP1. May protect cells from apoptosis through phosphorylation of BAD. In Mus musculus (Mouse), this protein is Serine/threonine-protein kinase PAK 6 (Pak6).